The chain runs to 21 residues: Dahlein-5.2 (21 aa).

In terms of tissue distribution, expressed by the skin dorsal glands.

The protein resides in the secreted. In terms of biological role, has no antimicrobial activity. Strongly inhibits the formation of NO by neuronal nitric oxide synthase at micromolar concentrations. The sequence is that of Dahlein-5.2 from Ranoidea dahlii (Dahl's aquatic frog).